The following is a 202-amino-acid chain: uncharacterized protein (202 aa).

This is an uncharacterized protein from Saccharomyces cerevisiae (strain ATCC 204508 / S288c) (Baker's yeast).